Reading from the N-terminus, the 399-residue chain is Protein HYM1 (399 aa).

Low complexity predominate over residues valine 363 to valine 382. The interval valine 363 to arginine 399 is disordered. Residues methionine 383–arginine 399 are compositionally biased toward polar residues.

This sequence belongs to the Mo25 family.

This chain is Protein HYM1 (HYM1), found in Saccharomyces cerevisiae (strain ATCC 204508 / S288c) (Baker's yeast).